We begin with the raw amino-acid sequence, 628 residues long: tRNA uridine 5-carboxymethylaminomethyl modification enzyme MnmG (628 aa).

14-19 (GAGHAG) is a binding site for FAD. NAD(+) is bound at residue 273-287 (GPRYCPSIEDKVVRF).

Belongs to the MnmG family. As to quaternary structure, homodimer. Heterotetramer of two MnmE and two MnmG subunits. FAD serves as cofactor.

It is found in the cytoplasm. In terms of biological role, NAD-binding protein involved in the addition of a carboxymethylaminomethyl (cmnm) group at the wobble position (U34) of certain tRNAs, forming tRNA-cmnm(5)s(2)U34. This is tRNA uridine 5-carboxymethylaminomethyl modification enzyme MnmG from Bacillus velezensis (strain DSM 23117 / BGSC 10A6 / LMG 26770 / FZB42) (Bacillus amyloliquefaciens subsp. plantarum).